A 114-amino-acid chain; its full sequence is Ribonuclease P protein component (114 aa).

It belongs to the RnpA family. In terms of assembly, consists of a catalytic RNA component (M1 or rnpB) and a protein subunit.

It carries out the reaction Endonucleolytic cleavage of RNA, removing 5'-extranucleotides from tRNA precursor.. RNaseP catalyzes the removal of the 5'-leader sequence from pre-tRNA to produce the mature 5'-terminus. It can also cleave other RNA substrates such as 4.5S RNA. The protein component plays an auxiliary but essential role in vivo by binding to the 5'-leader sequence and broadening the substrate specificity of the ribozyme. The protein is Ribonuclease P protein component of Staphylococcus haemolyticus (strain JCSC1435).